The chain runs to 150 residues: Protein ORF35 (150 aa).

In Homo sapiens (Human), this protein is Protein ORF35 (ORF35).